Reading from the N-terminus, the 435-residue chain is Serine/threonine-protein kinase 40 (435 aa).

A compositionally biased stretch (basic and acidic residues) spans Met1–Ala10. The disordered stretch occupies residues Met1–Ser25. The 298-residue stretch at Phe35 to Ile332 folds into the Protein kinase domain. Residues Leu41–Ile49 and Lys66 each bind ATP. Residue Asp197 is the Proton acceptor of the active site.

The protein belongs to the protein kinase superfamily. CAMK Ser/Thr protein kinase family.

It localises to the nucleus. The protein localises to the cytoplasm. It carries out the reaction L-seryl-[protein] + ATP = O-phospho-L-seryl-[protein] + ADP + H(+). It catalyses the reaction L-threonyl-[protein] + ATP = O-phospho-L-threonyl-[protein] + ADP + H(+). In terms of biological role, may be a negative regulator of NF-kappa-B and p53-mediated gene transcription. The sequence is that of Serine/threonine-protein kinase 40 (STK40) from Pongo abelii (Sumatran orangutan).